The following is a 209-amino-acid chain: Methylated-DNA--protein-cysteine methyltransferase (209 aa).

C5 contributes to the Zn(2+) binding site. S14 is modified (phosphoserine). Residues C24 and H29 each contribute to the Zn(2+) site. The disordered stretch occupies residues 35-57 (SGKTPSSDPKEAPASPELLGGPE). Residue H89 coordinates Zn(2+). Residues T99, Y118, Q119, N127, and R132 each contribute to the DNA site. Catalysis depends on C149, which acts as the Nucleophile; methyl group acceptor. S155 provides a ligand contact to DNA. S205 carries the phosphoserine modification.

The protein belongs to the MGMT family. Requires Zn(2+) as cofactor.

The protein localises to the nucleus. It catalyses the reaction a 6-O-methyl-2'-deoxyguanosine in DNA + L-cysteinyl-[protein] = S-methyl-L-cysteinyl-[protein] + a 2'-deoxyguanosine in DNA. The catalysed reaction is a 4-O-methyl-thymidine in DNA + L-cysteinyl-[protein] = a thymidine in DNA + S-methyl-L-cysteinyl-[protein]. Involved in the cellular defense against the biological effects of O6-methylguanine (O6-MeG) and O4-methylthymine (O4-MeT) in DNA. Repairs the methylated nucleobase in DNA by stoichiometrically transferring the methyl group to a cysteine residue in the enzyme. This is a suicide reaction: the enzyme is irreversibly inactivated. The polypeptide is Methylated-DNA--protein-cysteine methyltransferase (MGMT) (Cricetulus griseus (Chinese hamster)).